The chain runs to 95 residues: Protein RnfH (95 aa).

It belongs to the UPF0125 (RnfH) family.

The chain is Protein RnfH from Methylococcus capsulatus (strain ATCC 33009 / NCIMB 11132 / Bath).